The primary structure comprises 988 residues: UvrABC system protein A (988 aa).

33-40 (GLSGSGKS) contacts ATP. The C4-type zinc finger occupies 255–282 (CPVCDYSLPELEPRLFSFNAPVGACPSC). ABC transporter domains lie at 312–589 (WDRR…PRSL) and 609–938 (PNPK…QFLA). 642–649 (GVSGSGKS) is a binding site for ATP. The segment at 741-767 (CEACQGDGMIKVEMHFLPDVYVPCDVC) adopts a C4-type zinc-finger fold. The tract at residues 948–988 (ETRPAAMANKPDARPPRKVKPEKVAKATKTATKKTAKKKAS) is disordered. The span at 958-972 (PDARPPRKVKPEKVA) shows a compositional bias: basic and acidic residues. A compositionally biased stretch (basic residues) spans 978–988 (ATKKTAKKKAS).

Belongs to the ABC transporter superfamily. UvrA family. In terms of assembly, forms a heterotetramer with UvrB during the search for lesions.

Its subcellular location is the cytoplasm. In terms of biological role, the UvrABC repair system catalyzes the recognition and processing of DNA lesions. UvrA is an ATPase and a DNA-binding protein. A damage recognition complex composed of 2 UvrA and 2 UvrB subunits scans DNA for abnormalities. When the presence of a lesion has been verified by UvrB, the UvrA molecules dissociate. The protein is UvrABC system protein A of Xanthomonas campestris pv. campestris (strain ATCC 33913 / DSM 3586 / NCPPB 528 / LMG 568 / P 25).